Consider the following 546-residue polypeptide: Hexose transporter HXT10 (546 aa).

Residues 1-44 are Cytoplasmic-facing; that stretch reads MVSSSVSILGTSAKASTSLSRKDEIKLTPETREASLDIPYKPII. The chain crosses the membrane as a helical span at residues 45-65; the sequence is AYWTVMGLCLMIAFGGFIFGW. The Extracellular segment spans residues 66-100; that stretch reads DTGTISGFINQTDFKRRFGELQRDGSFQLSDVRTG. A glycan (N-linked (GlcNAc...) asparagine) is linked at N75. Residues 101–121 traverse the membrane as a helical segment; that stretch reads LIVGIFNIGCALGGLTLGRLG. The Cytoplasmic portion of the chain corresponds to 122-127; it reads DIYGRK. Residues 128–148 form a helical membrane-spanning segment; it reads IGLMCVILVYVVGIVIQIASS. The Extracellular segment spans residues 149–158; it reads DKWYQYFIGR. The helical transmembrane segment at 159-179 threads the bilayer; the sequence is IVSGMGVGGVAVLSPTLISEI. Residues 180-185 are Cytoplasmic-facing; sequence SPKHLR. A helical membrane pass occupies residues 186-206; the sequence is GTCVSFYQLMITLGIFLGYCT. At 207–220 the chain is on the extracellular side; it reads NYGTKKYSNSIQWR. The chain crosses the membrane as a helical span at residues 221–241; the sequence is VPLGLCFAWAIFMVIGMVMVP. The Cytoplasmic segment spans residues 242 to 324; that stretch reads ESPRYLVEKG…IQSLQQLTGC (83 aa). The helical transmembrane segment at 325-341 threads the bilayer; it reads NYFFYYGTTIFNAVGMQ. At 342 to 347 the chain is on the extracellular side; the sequence is DSFETS. The chain crosses the membrane as a helical span at residues 348–365; the sequence is IVLGAVNFASTFVALYIV. Over 366 to 372 the chain is Cytoplasmic; sequence DKFGRRK. A helical transmembrane segment spans residues 373–393; the sequence is CLLWGSASMAICFVIFATVGV. The Extracellular segment spans residues 394-415; sequence TRLWPQGKDQPSSQSAGNVMIV. Residues 416-436 traverse the membrane as a helical segment; it reads FTCFFIFSFAITWAPIAYVIV. Residues 437 to 453 are Cytoplasmic-facing; the sequence is AETYPLRVKNRAMAIAV. A helical membrane pass occupies residues 454-474; that stretch reads GANWMWGFLIGFFTPFITRSI. Residue G475 is a topological domain, extracellular. Residues 476 to 496 form a helical membrane-spanning segment; that stretch reads FSYGYVFMGCLIFSYFYVFFF. The Cytoplasmic segment spans residues 497–546; it reads VCETKGLTLEEVNEMYEERIKPWKSGGWIPSSRRTPQPTSSTPLVIVDSK.

This sequence belongs to the major facilitator superfamily. Sugar transporter (TC 2.A.1.1) family.

It is found in the membrane. Its function is as follows. Probable glucose transporter. In Saccharomyces cerevisiae (strain ATCC 204508 / S288c) (Baker's yeast), this protein is Hexose transporter HXT10 (HXT10).